A 695-amino-acid polypeptide reads, in one-letter code: Nucleoprotein (695 aa).

Coiled-coil stretches lie at residues 316 to 341 (VNVG…RRHE) and 372 to 399 (QTLA…VEDQ). 3 disordered regions span residues 423–458 (VQAR…SFVD), 483–515 (TSRE…TNPI), and 527–612 (PVQE…DTRA). Polar residues-rich tracts occupy residues 495-505 (RQSQDLNNSQG) and 537-552 (TTDS…SDNE). The PTAP/PSAP motif motif lies at 603 to 606 (PSAP).

Belongs to the filoviruses nucleoprotein family. As to quaternary structure, homooligomer. Homomultimerizes to form the nucleocapsid. Binds to viral genomic RNA. Interacts with VP35 and VP30 to form the nucleocapsid. Also interacts with VP24 and VP40. Post-translationally, phosphorylated.

It localises to the virion. The protein resides in the host cytoplasm. In terms of biological role, encapsidates the genome, protecting it from nucleases. The encapsidated genomic RNA is termed the nucleocapsid and serves as template for transcription and replication. During replication, encapsidation by NP is coupled to RNA synthesis and all replicative products are resistant to nucleases. The protein is Nucleoprotein (NP) of Chlorocebus aethiops (Green monkey).